Here is a 90-residue protein sequence, read N- to C-terminus: U-scoloptoxin(15)-Sa3a (90 aa).

Residues 1 to 18 (MKMVYLGLFLIITSCVIS) form the signal peptide.

This sequence belongs to the scoloptoxin-15 family. In terms of processing, contains 3 disulfide bonds. In terms of tissue distribution, expressed by the venom gland.

It localises to the secreted. The sequence is that of U-scoloptoxin(15)-Sa3a from Scolopendra alternans (Florida Keys giant centipede).